A 129-amino-acid chain; its full sequence is Small ribosomal subunit protein uS11 (129 aa).

This sequence belongs to the universal ribosomal protein uS11 family. As to quaternary structure, part of the 30S ribosomal subunit. Interacts with proteins S7 and S18. Binds to IF-3.

Its function is as follows. Located on the platform of the 30S subunit, it bridges several disparate RNA helices of the 16S rRNA. Forms part of the Shine-Dalgarno cleft in the 70S ribosome. The sequence is that of Small ribosomal subunit protein uS11 from Erwinia tasmaniensis (strain DSM 17950 / CFBP 7177 / CIP 109463 / NCPPB 4357 / Et1/99).